A 101-amino-acid chain; its full sequence is Albumin (101 aa).

2 Albumin domains span residues 1–80 (DAEH…AFXY) and 81–101 (ESGA…PDVL). Residue His4 coordinates Cu cation.

Belongs to the ALB/AFP/VDB family. Plasma.

It is found in the secreted. Its function is as follows. Binds water, Ca(2+), Na(+), K(+), fatty acids, hormones, bilirubin and drugs. Its main function is the regulation of the colloidal osmotic pressure of blood. This is Albumin (alb) from Neoceratodus forsteri (Australian lungfish).